The following is a 213-amino-acid chain: Transcriptional regulatory protein CrdR (213 aa).

Residues Lys-4–Phe-119 form the Response regulatory domain. Residue Asp-53 is modified to 4-aspartylphosphate. A DNA-binding region (ompR/PhoB-type) is located at residues Asp-121–Pro-212.

Phosphorylated by CrdS.

In terms of biological role, member of the two-component regulatory system CrdR/CrdS that induces the transcriptional induction of the copper resistance determinant CrdA. Upon phosphorylation by CrdS, functions as a transcriptional regulator by direct binding to promoter regions of target genes including the crdA promoter or nitric oxide-responsive gene promoters. This is Transcriptional regulatory protein CrdR from Helicobacter pylori (strain ATCC 700392 / 26695) (Campylobacter pylori).